The primary structure comprises 335 residues: Phosphatidylinositol:ceramide inositolphosphotransferase (335 aa).

Over 1–21 the chain is Cytoplasmic; that stretch reads MVLMGPHSALRLLPLKTQAIR. A helical membrane pass occupies residues 22 to 42; sequence FVLLLLLSVLILAVALLVTNA. Residues 43–72 are Extracellular-facing; the sequence is RMPDPKVVRPLPDIGFEVFPKVGWLEHLTD. Residues 73-93 traverse the membrane as a helical segment; that stretch reads VCIFILNFLSLLVVFKLYLLH. At 94–98 the chain is on the cytoplasmic side; that stretch reads RQNEG. The helical transmembrane segment at 99–119 threads the bilayer; it reads LDELQPFSCCPLIGKIIFGVW. Topologically, residues 120 to 139 are extracellular; the sequence is DSGRQSGIEKRDAHLIAWIR. A helical transmembrane segment spans residues 140-160; sequence YFTTYFIVLLFRAIVVVMTSY. Over 161-179 the chain is Cytoplasmic; it reads PATDNHCQNPMKITNPVKN. A helical membrane pass occupies residues 180 to 200; sequence VIMTLVTFGSGSIHCGDLMFS. Residues 201 to 203 are Extracellular-facing; the sequence is GHT. The active site involves His202. The chain crosses the membrane as a helical span at residues 204-224; that stretch reads VSITLSLLVQWIYGSMLHWVF. Residues 225-335 lie on the Cytoplasmic side of the membrane; that stretch reads RPASVLLVLL…GPACGNFGHW (111 aa). Residues His245 and Asp249 contribute to the active site.

The protein belongs to the sphingomyelin synthase family.

The protein resides in the membrane. In terms of biological role, bidirectional lipid inositolphosphotransferase capable of converting phosphatidylinositol (PI) and ceramide to inositol-phosphorylceramide (IPC) and diacylglycerol (DAG) and vice versa. Direction is dependent on the relative concentrations of DAG and ceramide as phosphoinositol acceptors. Essential for viability of the pathogenic bloodstream stage of this human protozoan parasite and, consequently, can be considered as potential drug target. This is Phosphatidylinositol:ceramide inositolphosphotransferase from Trypanosoma cruzi (strain CL Brener).